The sequence spans 186 residues: Iodotyrosine deiodinase (186 aa).

Residues 11 to 15 (RKTVR), 38 to 39 (PS), and Ser39 each bind FMN. Positions 41, 68, 72, and 92 each coordinate 3-iodo-L-tyrosine. 4 residues coordinate L-tyrosine: Met41, Glu68, Tyr72, and Lys92. Arg176 is an FMN binding site.

The protein belongs to the nitroreductase family. As to quaternary structure, homodimer. The cofactor is FMN.

It carries out the reaction 2 iodide + L-tyrosine + 2 NADP(+) = 3,5-diiodo-L-tyrosine + 2 NADPH + H(+). The enzyme catalyses iodide + L-tyrosine + NADP(+) = 3-iodo-L-tyrosine + NADPH. The catalysed reaction is 3-iodo-L-tyrosine + iodide + NADP(+) = 3,5-diiodo-L-tyrosine + NADPH + H(+). It catalyses the reaction L-tyrosine + chloride + NADP(+) = 3-chloro-L-tyrosine + NADPH. It carries out the reaction bromide + L-tyrosine + NADP(+) = 3-bromo-L-tyrosine + NADPH. Its function is as follows. Catalyzes the dehalogenation of halotyrosines such as 3-bromo-L-tyrosine, 3-chloro-L-tyrosine, 3-iodo-L-tyrosine and 3,5-diiodo-L-tyrosine. Activity towards 2-iodophenol is weak. This Thermotoga neapolitana (strain ATCC 49049 / DSM 4359 / NBRC 107923 / NS-E) protein is Iodotyrosine deiodinase.